We begin with the raw amino-acid sequence, 312 residues long: HPr kinase/phosphorylase (312 aa).

Residues His-139 and Lys-160 contribute to the active site. 154-161 (GDSGIGKS) lines the ATP pocket. Residue Ser-161 participates in Mg(2+) binding. Asp-178 acts as the Proton acceptor; for phosphorylation activity. Proton donor; for dephosphorylation activity in catalysis. Residues 202-211 (IEIRGVGIID) form an important for the catalytic mechanism of both phosphorylation and dephosphorylation region. Residue Glu-203 participates in Mg(2+) binding. The active site involves Arg-244. Residues 265 to 270 (PVKTGR) form an important for the catalytic mechanism of dephosphorylation region.

This sequence belongs to the HPrK/P family. As to quaternary structure, homohexamer. It depends on Mg(2+) as a cofactor.

It catalyses the reaction [HPr protein]-L-serine + ATP = [HPr protein]-O-phospho-L-serine + ADP + H(+). It carries out the reaction [HPr protein]-O-phospho-L-serine + phosphate + H(+) = [HPr protein]-L-serine + diphosphate. Its function is as follows. Catalyzes the ATP- as well as the pyrophosphate-dependent phosphorylation of a specific serine residue in HPr, a phosphocarrier protein of the phosphoenolpyruvate-dependent sugar phosphotransferase system (PTS). HprK/P also catalyzes the pyrophosphate-producing, inorganic phosphate-dependent dephosphorylation (phosphorolysis) of seryl-phosphorylated HPr (P-Ser-HPr). The two antagonistic activities of HprK/P are regulated by several intracellular metabolites, which change their concentration in response to the absence or presence of rapidly metabolisable carbon sources (glucose, fructose, etc.) in the growth medium. Therefore, by controlling the phosphorylation state of HPr, HPrK/P is a sensor enzyme that plays a major role in the regulation of carbon metabolism and sugar transport: it mediates carbon catabolite repression (CCR), and regulates PTS-catalyzed carbohydrate uptake and inducer exclusion. This is HPr kinase/phosphorylase from Streptococcus pneumoniae (strain ATCC BAA-255 / R6).